The sequence spans 135 residues: Large ribosomal subunit protein bL17 (135 aa).

This sequence belongs to the bacterial ribosomal protein bL17 family. As to quaternary structure, part of the 50S ribosomal subunit. Contacts protein L32.

This is Large ribosomal subunit protein bL17 from Listeria monocytogenes serotype 4b (strain CLIP80459).